A 37-amino-acid chain; its full sequence is Large ribosomal subunit protein bL36c (37 aa).

This sequence belongs to the bacterial ribosomal protein bL36 family.

The protein resides in the plastid. The protein localises to the chloroplast. This Chlorella vulgaris (Green alga) protein is Large ribosomal subunit protein bL36c (rpl36).